Reading from the N-terminus, the 279-residue chain is Release factor glutamine methyltransferase (279 aa).

2 residues coordinate S-adenosyl-L-methionine: glutamate 141 and asparagine 187. 187 to 190 is a binding site for substrate; it reads NPPY.

It belongs to the protein N5-glutamine methyltransferase family. PrmC subfamily.

It carries out the reaction L-glutaminyl-[peptide chain release factor] + S-adenosyl-L-methionine = N(5)-methyl-L-glutaminyl-[peptide chain release factor] + S-adenosyl-L-homocysteine + H(+). Functionally, methylates the class 1 translation termination release factors RF1/PrfA and RF2/PrfB on the glutamine residue of the universally conserved GGQ motif. The chain is Release factor glutamine methyltransferase from Corynebacterium glutamicum (strain ATCC 13032 / DSM 20300 / JCM 1318 / BCRC 11384 / CCUG 27702 / LMG 3730 / NBRC 12168 / NCIMB 10025 / NRRL B-2784 / 534).